The following is a 292-amino-acid chain: Large ribosomal subunit protein bL19m (292 aa).

The segment at 41–60 is disordered; that stretch reads SRFQSTGPSEPGGFKPPPKP. The residue at position 77 (Ser77) is a Phosphoserine.

The protein belongs to the bacterial ribosomal protein bL19 family. In terms of assembly, component of the mitochondrial ribosome large subunit (39S) which comprises a 16S rRNA and about 50 distinct proteins.

It is found in the mitochondrion. The sequence is that of Large ribosomal subunit protein bL19m (Mrpl19) from Mus musculus (Mouse).